Reading from the N-terminus, the 249-residue chain is 5'-nucleotidase SurE (249 aa).

4 residues coordinate a divalent metal cation: D8, D9, S39, and N91.

The protein belongs to the SurE nucleotidase family. A divalent metal cation is required as a cofactor.

The protein localises to the cytoplasm. It carries out the reaction a ribonucleoside 5'-phosphate + H2O = a ribonucleoside + phosphate. Nucleotidase that shows phosphatase activity on nucleoside 5'-monophosphates. The chain is 5'-nucleotidase SurE from Haemophilus influenzae (strain PittGG).